The chain runs to 353 residues: Putative 3-oxoacyl-[acyl-carrier-protein] synthase 3 (353 aa).

Catalysis depends on residues Cys122, His268, and Asn299.

Belongs to the thiolase-like superfamily. FabH family. As to quaternary structure, homodimer.

It is found in the cytoplasm. The catalysed reaction is malonyl-[ACP] + acetyl-CoA + H(+) = 3-oxobutanoyl-[ACP] + CO2 + CoA. The protein operates within lipid metabolism; fatty acid biosynthesis. May catalyze the condensation reaction of fatty acid synthesis by the addition to an acyl acceptor of two carbons from malonyl-ACP. The sequence is that of Putative 3-oxoacyl-[acyl-carrier-protein] synthase 3 from Campylobacter jejuni subsp. jejuni serotype O:2 (strain ATCC 700819 / NCTC 11168).